Reading from the N-terminus, the 607-residue chain is MAQNIPTKRQSAFGVFVKSKVKGPTIQQTGATKTPKTPSKIRRLSIRKSTRKIKHALKGKSGSQPVAAHKDMPVTQNTGQGEEGVKLKGYKMKTSPARVQEPQRTGSPEENSIGKGNIKTNIKGSQNVQAGQKFQERIATQHPQKRKPFGIEDSDDKTPVKRVRSDTAKSVQSPAKAVDVGEVEDSTEEAEKMFEWLIHPVKKEKFFSELWEKKPLLVKRHLESYNDGWFSTEDLTKILHENDIQFGRNLDVTTYEGGQRETHNPPGRANPAVVWDYYQNGCSVRLLNPQTYSQGVWRLCSTLQEYFSSMVGANIYLTPPGTQGFAPHYDDIEAFVLQLEGNFSQEEIGEAILDVTLEPGDLLYFPRGTIHQASALPDTHSLHITVSTCQRNTWGDLMEKLVPAALTMAFSEDVEFRQALPRDYLDYMGLANADLDDPRRKAFLETLQSLLSRLVNYVPVDAGVDQKAVEFMRDCLPPVFTKNERACSIYGCRTRLEKGRVVGSVDLKTSTPVKLIRKGAARLVMEGEQVFLYHVLENARVYHGAELQPIEVPPEAAPAIEYLMHSYPEYVTVDSFPLDHQQDKIDLAMLMFEKGIIIAQEPASVDN.

Disordered regions lie at residues 23–121 (GPTI…IKTN) and 139–184 (ATQH…GEVE). A compositionally biased stretch (polar residues) spans 25–37 (TIQQTGATKTPKT). The segment covering 39-58 (SKIRRLSIRKSTRKIKHALK) has biased composition (basic residues). The segment covering 156–167 (DKTPVKRVRSDT) has biased composition (basic and acidic residues). Residues 188–405 (EEAEKMFEWL…DLMEKLVPAA (218 aa)) enclose the JmjC domain. 3 residues coordinate Fe cation: H328, D330, and H371.

Belongs to the ROX family. NO66 subfamily. Fe(2+) is required as a cofactor.

The protein localises to the nucleus. It catalyses the reaction L-histidyl-[protein] + 2-oxoglutarate + O2 = (3S)-3-hydroxy-L-histidyl-[protein] + succinate + CO2. The catalysed reaction is N(6),N(6)-dimethyl-L-lysyl(36)-[histone H3] + 2 2-oxoglutarate + 2 O2 = L-lysyl(36)-[histone H3] + 2 formaldehyde + 2 succinate + 2 CO2. Oxygenase that can act as both a histone lysine demethylase and a ribosomal histidine hydroxylase. Specifically demethylates 'Lys-4' (H3K4me) and 'Lys-36' (H3K36me) of histone H3, thereby playing a central role in histone code. Also catalyzes the hydroxylation of 60S ribosomal protein L8. The protein is Bifunctional lysine-specific demethylase and histidyl-hydroxylase NO66 of Branchiostoma floridae (Florida lancelet).